The following is a 1043-amino-acid chain: Ras guanine nucleotide exchange factor S (1043 aa).

A coiled-coil region spans residues Ile-109–Leu-142. Composition is skewed to low complexity over residues Gln-135 to Ile-145, Leu-245 to Ser-258, Ser-266 to Ser-281, and Asn-293 to Ser-307. Disordered stretches follow at residues Gln-135–Ile-160 and Leu-245–Gln-316. Residues Leu-404–Glu-434 are a coiled coil. One can recognise an N-terminal Ras-GEF domain in the interval Lys-645–Ile-768. Positions Ser-803 to Lys-1043 constitute a Ras-GEF domain.

In terms of biological role, promotes the exchange of Ras-bound GDP by GTP. The polypeptide is Ras guanine nucleotide exchange factor S (gefS) (Dictyostelium discoideum (Social amoeba)).